The primary structure comprises 261 residues: Syntaxin-7 (261 aa).

At Ser-2 the chain carries N-acetylserine. The Cytoplasmic portion of the chain corresponds to 2 to 238 (SYTPGVGGDP…DYQRKSRKTL (237 aa)). Thr-4 is modified (phosphothreonine). Phosphoserine is present on Ser-45. Residues 47–69 (ELRQQLQQKQQYTNQLTKETDKY) adopt a coiled-coil conformation. Phosphoserine is present on Ser-75. Thr-79 is subject to Phosphothreonine. Residues Ser-125, Ser-126, Ser-129, and Ser-205 each carry the phosphoserine modification. Residues 129–148 (SGSFPEDSSKERNLVSWESQ) form a disordered region. The t-SNARE coiled-coil homology domain maps to 165–227 (LRLIHERESS…QQANQQLSRA (63 aa)). A helical; Anchor for type IV membrane protein membrane pass occupies residues 239–259 (CIIILILVIGVVIIGLIIWGL). Over 260–261 (NR) the chain is Vesicular.

Belongs to the syntaxin family. As to quaternary structure, forms a SNARE complex with VTI1B, STX8 and VAMP8 which functions in the homotypic fusion of late endosomes. Component of the SNARE complex composed of STX7, STX8, VAMP7 and VTI1B that is required for heterotypic fusion of late endosomes with lysosomes. Interacts with VPS11, VPS16 and VPS18. Interacts with VPS33A. Interacts with TPC1.

The protein localises to the early endosome membrane. Its function is as follows. May be involved in protein trafficking from the plasma membrane to the early endosome (EE) as well as in homotypic fusion of endocytic organelles. Mediates the endocytic trafficking from early endosomes to late endosomes and lysosomes. In Pongo abelii (Sumatran orangutan), this protein is Syntaxin-7 (STX7).